We begin with the raw amino-acid sequence, 85 residues long: U4-theraphotoxin-Hhn1a (85 aa).

Positions 1–22 (MKVTLIAILTCAAVLVLRTTAA) are cleaved as a signal peptide. Positions 23–48 (EELEAESQLMEVGMPDTELAAVDEER) are excised as a propeptide. Cystine bridges form between cysteine 52–cysteine 66, cysteine 56–cysteine 77, and cysteine 71–cysteine 82.

This sequence belongs to the neurotoxin 12 (Hwtx-2) family. 02 (Hwtx-2) subfamily. Monomer. In terms of tissue distribution, expressed by the venom gland.

Its subcellular location is the secreted. Its function is as follows. Neurotoxin active on both insects and mammals. The sequence is that of U4-theraphotoxin-Hhn1a from Cyriopagopus hainanus (Chinese bird spider).